The chain runs to 84 residues: Small ribosomal subunit protein eS27-like (84 aa).

The span at 1-16 (MPLARDLLHPSLEEEK) shows a compositional bias: basic and acidic residues. The tract at residues 1-23 (MPLARDLLHPSLEEEKKKHKKKR) is disordered. The segment at 38 to 60 (PGCYKITTVFSHAQTVVLCVGCS) adopts a C4-type zinc-finger fold.

Belongs to the eukaryotic ribosomal protein eS27 family. Requires Zn(2+) as cofactor.

In Mus musculus (Mouse), this protein is Small ribosomal subunit protein eS27-like.